A 297-amino-acid polypeptide reads, in one-letter code: Guanylate kinase (297 aa).

The region spanning 4-183 is the Guanylate kinase-like domain; sequence GKMIIISGPS…AVAKITDVLH (180 aa). 11 to 18 provides a ligand contact to ATP; sequence GPSGVGKG. Residues 204-297 form a unknown region; sequence EQIVKEKYMY…EQKHYNNDEF (94 aa).

The protein belongs to the guanylate kinase family.

The protein localises to the cytoplasm. The catalysed reaction is GMP + ATP = GDP + ADP. Its function is as follows. Essential for recycling GMP and indirectly, cGMP. This Mycoplasma capricolum subsp. capricolum (strain California kid / ATCC 27343 / NCTC 10154) protein is Guanylate kinase (gmk).